The following is a 326-amino-acid chain: Protein BCCIP homolog (326 aa).

The tract at residues 37-81 (SHPEDCQCSDEDISFDEKQKIPNLPRKGKEEQVSDSSDEEDSQED) is disordered. The residue at position 45 (Ser-45) is a Phosphoserine. The span at 72–81 (SSDEEDSQED) shows a compositional bias: acidic residues.

It belongs to the BCP1 family.

This is Protein BCCIP homolog from Arabidopsis thaliana (Mouse-ear cress).